Here is a 563-residue protein sequence, read N- to C-terminus: Arginine--tRNA ligase (563 aa).

Positions 122–132 match the 'HIGH' region motif; the sequence is PNIAKPISMGH.

The protein belongs to the class-I aminoacyl-tRNA synthetase family. In terms of assembly, monomer.

It is found in the cytoplasm. It catalyses the reaction tRNA(Arg) + L-arginine + ATP = L-arginyl-tRNA(Arg) + AMP + diphosphate. The chain is Arginine--tRNA ligase from Enterococcus faecalis (strain ATCC 700802 / V583).